A 131-amino-acid chain; its full sequence is Small ribosomal subunit protein uS11 (131 aa).

This sequence belongs to the universal ribosomal protein uS11 family. Part of the 30S ribosomal subunit. Interacts with proteins S7 and S18. Binds to IF-3.

Located on the platform of the 30S subunit, it bridges several disparate RNA helices of the 16S rRNA. Forms part of the Shine-Dalgarno cleft in the 70S ribosome. The chain is Small ribosomal subunit protein uS11 from Paramagnetospirillum magneticum (strain ATCC 700264 / AMB-1) (Magnetospirillum magneticum).